Reading from the N-terminus, the 560-residue chain is Formate--tetrahydrofolate ligase (560 aa).

69 to 76 (TPAGEGKS) provides a ligand contact to ATP.

This sequence belongs to the formate--tetrahydrofolate ligase family.

It carries out the reaction (6S)-5,6,7,8-tetrahydrofolate + formate + ATP = (6R)-10-formyltetrahydrofolate + ADP + phosphate. Its pathway is one-carbon metabolism; tetrahydrofolate interconversion. The chain is Formate--tetrahydrofolate ligase from Listeria welshimeri serovar 6b (strain ATCC 35897 / DSM 20650 / CCUG 15529 / CIP 8149 / NCTC 11857 / SLCC 5334 / V8).